Reading from the N-terminus, the 526-residue chain is MCADTPHHPTPVHTEEAMAITLGELARTIGGELFNAPDQDLEIHNIGLDSSTLAKKAPIFAAVPGSRKHGAEFADTDRAAGALAVLTDRDGATILDRKGDTRPRLIVDDVREVLGVASSSVYGDPSRDLVLIGVTGTSGKTTTSYLLERGLMEAGYKVGLIGTTGTRIDGEPVPTKLTTPEAPTLQKLFYRMRQHGVTHVVMEVSSHALSLGRVSGSHFNVAAFTNLSQDHLDFHDTMEEYFDAKALFFRAGSPLAADHQVVCIDDEWGTRMAEVAGNAQTVATTGKRADFTAGLVTVKETGEQSFTVTVPDHGEVPVTLALPGAFNVANATLALAAAVRAGVDPVAFARGMAQVAVPGRMERIDEGQDFLAVVDYAHKPAAVAAVLDTLRTQIDGRLGVVIGAGGDRDATKRAPMGELSARRADLVIVTDDNPRSEVPATIRAAVMEGARRGAAEADHEVEVREIGDRAEAIRALIEWAGPGDGIVVAGKGHEVGQLIAGVTHHFDDREQVREALRHTQSDGEGK.

Leu48 and Ser50 together coordinate UDP-N-acetyl-alpha-D-muramoyl-L-alanyl-D-glutamate. 136–142 (GTSGKTT) contacts ATP. Residues 178–179 (TT), Ser205, and Arg213 each bind UDP-N-acetyl-alpha-D-muramoyl-L-alanyl-D-glutamate. Position 245 is an N6-carboxylysine (Lys245). Residues Arg408, 432 to 435 (DNPR), Gly490, and Glu494 contribute to the meso-2,6-diaminopimelate site. A Meso-diaminopimelate recognition motif motif is present at residues 432–435 (DNPR).

It belongs to the MurCDEF family. MurE subfamily. Mg(2+) is required as a cofactor. Post-translationally, carboxylation is probably crucial for Mg(2+) binding and, consequently, for the gamma-phosphate positioning of ATP.

The protein resides in the cytoplasm. The enzyme catalyses UDP-N-acetyl-alpha-D-muramoyl-L-alanyl-D-glutamate + meso-2,6-diaminopimelate + ATP = UDP-N-acetyl-alpha-D-muramoyl-L-alanyl-gamma-D-glutamyl-meso-2,6-diaminopimelate + ADP + phosphate + H(+). Its pathway is cell wall biogenesis; peptidoglycan biosynthesis. Its function is as follows. Catalyzes the addition of meso-diaminopimelic acid to the nucleotide precursor UDP-N-acetylmuramoyl-L-alanyl-D-glutamate (UMAG) in the biosynthesis of bacterial cell-wall peptidoglycan. The protein is UDP-N-acetylmuramoyl-L-alanyl-D-glutamate--2,6-diaminopimelate ligase of Corynebacterium efficiens (strain DSM 44549 / YS-314 / AJ 12310 / JCM 11189 / NBRC 100395).